The sequence spans 179 residues: uncharacterized protein (179 aa).

Positions 1–27 form a signal peptide, or 24; it reads MKTISKQLSAVIFPFIFSACVSQSASS.

This is an uncharacterized protein from Haemophilus influenzae (strain ATCC 51907 / DSM 11121 / KW20 / Rd).